Here is a 150-residue protein sequence, read N- to C-terminus: Ribosome maturation factor RimP (150 aa).

This sequence belongs to the RimP family.

It is found in the cytoplasm. In terms of biological role, required for maturation of 30S ribosomal subunits. This Thermotoga neapolitana (strain ATCC 49049 / DSM 4359 / NBRC 107923 / NS-E) protein is Ribosome maturation factor RimP.